A 423-amino-acid chain; its full sequence is Histidine--tRNA ligase (423 aa).

This sequence belongs to the class-II aminoacyl-tRNA synthetase family. Homodimer.

Its subcellular location is the cytoplasm. It carries out the reaction tRNA(His) + L-histidine + ATP = L-histidyl-tRNA(His) + AMP + diphosphate + H(+). The sequence is that of Histidine--tRNA ligase from Geobacillus sp. (strain WCH70).